A 1180-amino-acid polypeptide reads, in one-letter code: Nonsense-mediated mRNA decay factor SMG7 (1180 aa).

TPR repeat units lie at residues 151–184 (QHCL…VPSN) and 186–218 (QPYN…KFPF). Disordered regions lie at residues 496–636 (PQEK…TQTT), 692–795 (QTAS…SYMQ), 893–913 (CSDQ…SSPL), 1019–1127 (SLFE…WAAQ), and 1148–1180 (SSMM…NPPH). Positions 504 to 520 (LQESSNGEQTPNESTHG) are enriched in polar residues. 3 stretches are compositionally biased toward basic and acidic residues: residues 547–559 (ENIK…REQN), 584–606 (NEQK…KTTD), and 615–627 (TELR…EARK). Residues 692–718 (QTASHPQSANPVQTGKPSHIPYSQQRP) show a composition bias toward polar residues. Positions 728 to 740 (PPQPQQTQPPPPQ) are enriched in pro residues. Over residues 741 to 778 (TSQQALQQSVQLQLQQQQQQQQQQQQQQQQSPTKQSSQ) the composition is skewed to low complexity. The segment covering 1026–1038 (WSPSLPASSDHST) has biased composition (polar residues). Residues 1039–1065 (PASQSPHSSNPSSLPSSPPTHSHGSMP) are compositionally biased toward low complexity. The span at 1076-1090 (DSRDRRANDRWKAEK) shows a compositional bias: basic and acidic residues. Over residues 1103–1125 (SASTSSVPETNSWHQGAPTSTWA) the composition is skewed to polar residues.

It is found in the cytoplasm. It localises to the nucleus. Plays a role in nonsense-mediated mRNA decay. Recruits UPF1 to cytoplasmic mRNA decay bodies. Together with SMG5 is thought to provide a link to the mRNA degradation machinery involving exonucleolytic pathways, and to serve as an adapter for UPF1 to protein phosphatase 2A (PP2A), thereby triggering UPF1 dephosphorylation. Required for normal embryonic development. The polypeptide is Nonsense-mediated mRNA decay factor SMG7 (Danio rerio (Zebrafish)).